Reading from the N-terminus, the 393-residue chain is Probable WRKY transcription factor 25 (393 aa).

Residues 160-224 (MVSRNSNDGY…YKGGHNHPKP (65 aa)) constitute a DNA-binding region (WRKY 1). Positions 191, 196, 219, and 221 each coordinate Zn(2+). Disordered regions lie at residues 217 to 242 (GGHN…VNGR) and 277 to 303 (SEYG…DEGM). A compositionally biased stretch (polar residues) spans 229–240 (RPSQSSLPSSVN). Residues 289–298 (PEMKRMKREG) show a composition bias toward basic and acidic residues. Residues 322 to 387 (SDIDVLIDGF…YEGRHNHDIP (66 aa)) constitute a DNA-binding region (WRKY 2). The Zn(2+) site is built by Cys353, Cys358, His382, and His384.

This sequence belongs to the WRKY group I family. Interacts with MKS1. Interacts with SIB1. Interacts with VQ10 and CAMBP25/VQ15. Phosphorylated by MPK4. As to expression, highly expressed in roots and at lower levels in leaves, stems and seeds.

It localises to the nucleus. Functionally, transcription factor. Interacts specifically with the W box (5'-(T)TGAC[CT]-3'), a frequently occurring elicitor-responsive cis-acting element. Functions with WRKY33 as positive regulator of salt stress response and abscisic acid (ABA) signaling. Plays a partial role in heat stress tolerance. Functions with WRKY26 and WRKY33 as positive regulator of plant thermotolerance by partially participating in ethylene-response signal transduction pathway. This chain is Probable WRKY transcription factor 25 (WRKY25), found in Arabidopsis thaliana (Mouse-ear cress).